Consider the following 445-residue polypeptide: Enolase (445 aa).

Substrate-binding residues include H165 and E174. Residue E217 is the Proton donor of the active site. Mg(2+)-binding residues include D252, E303, and D330. Residues E303 and D330 each coordinate substrate. K355 functions as the Proton acceptor in the catalytic mechanism. Residues S382–S385 and K406 contribute to the substrate site.

This sequence belongs to the enolase family. In terms of assembly, homodimer. Requires Mg(2+) as cofactor.

The protein resides in the cytoplasm. The enzyme catalyses (2R)-2-phosphoglycerate = phosphoenolpyruvate + H2O. It participates in carbohydrate degradation; glycolysis; pyruvate from D-glyceraldehyde 3-phosphate: step 4/5. The polypeptide is Enolase (ENO) (Eimeria tenella (Coccidian parasite)).